A 282-amino-acid chain; its full sequence is Putative phosphoenolpyruvate synthase regulatory protein (282 aa).

162–169 (GVSRSGKT) contacts ADP.

Belongs to the pyruvate, phosphate/water dikinase regulatory protein family. PSRP subfamily.

The catalysed reaction is [pyruvate, water dikinase] + ADP = [pyruvate, water dikinase]-phosphate + AMP + H(+). It catalyses the reaction [pyruvate, water dikinase]-phosphate + phosphate + H(+) = [pyruvate, water dikinase] + diphosphate. Functionally, bifunctional serine/threonine kinase and phosphorylase involved in the regulation of the phosphoenolpyruvate synthase (PEPS) by catalyzing its phosphorylation/dephosphorylation. The chain is Putative phosphoenolpyruvate synthase regulatory protein from Psychrobacter arcticus (strain DSM 17307 / VKM B-2377 / 273-4).